Reading from the N-terminus, the 181-residue chain is MSLFRSTMLRRQLLTSRSVCLRYSSTSTPENVVLPRLQADLKNAMRSKNKPALNTIRAIQAEIINASKTAKPITTDSALYSLIQKQIKSSSASIEEFRNAKREDLVEKEQAQLDVLQGYSGEIPTVGESEIDELVKSALEGLEEGKRSAGHVMGRVMSSIKGRAVDSEYVSKKIQEVVGAK.

The transit peptide at 1 to 23 (MSLFRSTMLRRQLLTSRSVCLRY) directs the protein to the mitochondrion.

The protein belongs to the AIM41 family.

It is found in the mitochondrion. The polypeptide is Altered inheritance of mitochondria protein 41, mitochondrial (AIM41) (Pyrenophora tritici-repentis (strain Pt-1C-BFP) (Wheat tan spot fungus)).